The chain runs to 152 residues: Endoribonuclease YbeY (152 aa).

Zn(2+) is bound by residues H113, H117, and H123.

It belongs to the endoribonuclease YbeY family. The cofactor is Zn(2+).

The protein localises to the cytoplasm. In terms of biological role, single strand-specific metallo-endoribonuclease involved in late-stage 70S ribosome quality control and in maturation of the 3' terminus of the 16S rRNA. In Wolbachia pipientis subsp. Culex pipiens (strain wPip), this protein is Endoribonuclease YbeY.